A 298-amino-acid chain; its full sequence is Single myb histone 2 (298 aa).

An HTH myb-type domain is found at 1 to 61; it reads MGVPKQRWTP…KWRNLSVTAG (61 aa). A DNA-binding region (H-T-H motif) is located at residues 28 to 57; that stretch reads WRTILRDSDFSALLRLRSNVDLKDKWRNLS. Residues 124–192 form the H15 domain; that stretch reads SVARLDDLIV…KVNQKYRIAP (69 aa). Residues 237–278 are a coiled coil; it reads EEAAAFAAKAVAEAEVAMAEAEEAARVAEAAENDAEAAKAFL.

The protein belongs to the histone H1/H5 family. SMH subfamily. In terms of assembly, forms a homodimer and heterodimers.

The protein resides in the nucleus. It localises to the chromosome. It is found in the nucleolus. Its subcellular location is the telomere. Functionally, binds preferentially double-stranded telomeric repeats, but may also bind to the single telomeric strand. The chain is Single myb histone 2 (SMH2) from Zea mays (Maize).